The sequence spans 142 residues: Hemoglobin subunit alpha-3 (142 aa).

The 141-residue stretch at 2-142 (TLTDSDKAAV…VATVLTSKYR (141 aa)) folds into the Globin domain. O2 is bound at residue histidine 59. Position 88 (histidine 88) interacts with heme b.

Belongs to the globin family. In terms of assembly, heterotetramer of two alpha chains and two beta chains. In terms of tissue distribution, red blood cells.

In terms of biological role, this is a larval (tadpole) alpha-globin. This chain is Hemoglobin subunit alpha-3 (hba3), found in Xenopus laevis (African clawed frog).